A 98-amino-acid polypeptide reads, in one-letter code: NADH-ubiquinone oxidoreductase chain 4L (98 aa).

A run of 3 helical transmembrane segments spans residues 1 to 21 (MSIV…GTLL), 29 to 49 (SLMC…LISL), and 59 to 79 (VPLI…ALLV).

The protein belongs to the complex I subunit 4L family. As to quaternary structure, core subunit of respiratory chain NADH dehydrogenase (Complex I) which is composed of 45 different subunits.

The protein resides in the mitochondrion inner membrane. It carries out the reaction a ubiquinone + NADH + 5 H(+)(in) = a ubiquinol + NAD(+) + 4 H(+)(out). Its function is as follows. Core subunit of the mitochondrial membrane respiratory chain NADH dehydrogenase (Complex I) which catalyzes electron transfer from NADH through the respiratory chain, using ubiquinone as an electron acceptor. Part of the enzyme membrane arm which is embedded in the lipid bilayer and involved in proton translocation. This is NADH-ubiquinone oxidoreductase chain 4L (MT-ND4L) from Hemiechinus auritus (Long-eared hedgehog).